Consider the following 229-residue polypeptide: Peptidyl-tRNA hydrolase (229 aa).

Tyrosine 17 is a tRNA binding site. The active-site Proton acceptor is histidine 22. TRNA contacts are provided by phenylalanine 74, asparagine 76, and asparagine 122. Residues alanine 194–threonine 229 form a disordered region. A compositionally biased stretch (low complexity) spans threonine 207–proline 223.

This sequence belongs to the PTH family. In terms of assembly, monomer.

The protein resides in the cytoplasm. It carries out the reaction an N-acyl-L-alpha-aminoacyl-tRNA + H2O = an N-acyl-L-amino acid + a tRNA + H(+). Functionally, hydrolyzes ribosome-free peptidyl-tRNAs (with 1 or more amino acids incorporated), which drop off the ribosome during protein synthesis, or as a result of ribosome stalling. In terms of biological role, catalyzes the release of premature peptidyl moieties from peptidyl-tRNA molecules trapped in stalled 50S ribosomal subunits, and thus maintains levels of free tRNAs and 50S ribosomes. This chain is Peptidyl-tRNA hydrolase, found in Desulfovibrio desulfuricans (strain ATCC 27774 / DSM 6949 / MB).